A 1140-amino-acid chain; its full sequence is Envelopment polyprotein (1140 aa).

The signal sequence occupies residues 1–17; sequence MVGWVCIFLVVLTTATA. Topologically, residues 18–480 are lumenal; sequence GLTRNLYELK…AHSLAVELCV (463 aa). 6 disulfide bridges follow: cysteine 30–cysteine 155, cysteine 64–cysteine 161, cysteine 113–cysteine 132, cysteine 137–cysteine 142, cysteine 179–cysteine 189, and cysteine 214–cysteine 251. Residue asparagine 138 is glycosylated (N-linked (GlcNAc...) asparagine; by host). Asparagine 351 carries an N-linked (GlcNAc...) asparagine; by host glycan. Intrachain disulfides connect cysteine 380–cysteine 439, cysteine 384–cysteine 393, cysteine 409–cysteine 428, and cysteine 456–cysteine 479. A glycan (N-linked (GlcNAc...) asparagine; by host) is linked at asparagine 403. Residues 490–510 form a helical membrane-spanning segment; the sequence is ALLITFCFGWLLIPAVTLIIL. Over 511–631 the chain is Cytoplasmic; the sequence is KILRLLTFSC…LGVFRYKSRC (121 aa). The binding to the ribonucleoprotein stretch occupies residues 520–537; it reads CSHYSTESKFKVILERVK. 2 CCHC-type zinc fingers span residues 549–569 and 574–595; these read CDIC…KKSC and CPYC…FAIC. Binding to the ribonucleoprotein stretches follow at residues 592 to 609, 596 to 607, and 615 to 629; these read FAIC…KKSL, KLTNRFQENLKK, and RKGC…RYKS. The region spanning 615–638 is the ITAM domain; that stretch reads RKGCYRTLGVFRYKSRCYVGLVWG. Phosphotyrosine is present on residues tyrosine 619 and tyrosine 632. Positions 619 to 622 match the YxxL motif; sequence YRTL. Residues 632-652 form a helical membrane-spanning segment; that stretch reads YVGLVWGILLTTELIIWAASA. Topologically, residues 653-1108 are lumenal; the sequence is DTPLMESGWS…EWLLGILNGN (456 aa). Intrachain disulfides connect cysteine 739-cysteine 774, cysteine 743-cysteine 781, cysteine 755-cysteine 888, cysteine 769-cysteine 899, cysteine 784-cysteine 907, cysteine 810-cysteine 819, cysteine 827-cysteine 836, and cysteine 867-cysteine 871. A fusion loop region spans residues 761–781; that stretch reads YQYETSWGCNPPDCPGVGTGC. A glycan (N-linked (GlcNAc...) asparagine; by host) is linked at asparagine 931. 5 disulfides stabilise this stretch: cysteine 973–cysteine 1003, cysteine 996–cysteine 1048, cysteine 1013–cysteine 1018, cysteine 1049–cysteine 1054, and cysteine 1088–cysteine 1092. Residues 1109 to 1129 form a helical membrane-spanning segment; sequence WVVVAVLIVILILSILLFSFF. Residues 1125–1140 form a binding to the ribonucleoprotein region; that stretch reads LFSFFCPVRSRKNKAN. The Cytoplasmic segment spans residues 1130–1140; sequence CPVRSRKNKAN.

Belongs to the hantavirus envelope glycoprotein family. In terms of assembly, homodimer. Homotetramer; forms heterotetrameric Gn-Gc spikes in the pre-fusion conformation. Interacts (via C-terminus) with the nucleoprotein. Interacts with host TUFM; this interaction contributes to the virus-induced degradation of mitochondria by autophagy, which leads to degradation of host MAVS and inhibition of type I interferon (IFN) responses. Interacts with host MAP1LC3B; this interaction contributes to the virus-induced degradation of mitochondria by autophagy, which leads to degradation of host MAVS and inhibition of type I interferon (IFN) responses. Homodimer. Homotetramer; forms heterotetrameric Gn-Gc spikes in the pre-fusion conformation. Homotrimer; forms homotrimer in the post-fusion conformation at acidic pH. Interacts (via C-terminus) with the nucleoprotein. In terms of processing, envelope polyprotein precursor is quickly cleaved in vivo just after synthesis, presumably by host signal peptidase.

The protein resides in the virion membrane. Its subcellular location is the host cell surface. It localises to the host Golgi apparatus membrane. The protein localises to the host endoplasmic reticulum membrane. It is found in the host mitochondrion. Forms homotetramers with glycoprotein C at the surface of the virion. Attaches the virion to host cell receptors including integrin ITGAV/ITGB3. This attachment induces virion internalization predominantly through clathrin-dependent endocytosis. Mediates the assembly and budding of infectious virus particles through its interaction with the nucleocapsid protein and the viral genome. May dysregulate normal immune and endothelial cell responses through an ITAM motif. Translocates to mitochondria, binds to host TUFM and recruits MAP1LC3B. These interactions induce mitochondrial autophagy and therefore destruction of host MAVS leading to inhibition of type I interferon (IFN) responses. Concomitant breakdown of glycoprotein N is apparently prevented by the nucleoprotein that may inhibit Gn-stimulated autophagosome-lysosome fusion. Interacts with the viral genomic RNA. In terms of biological role, forms homotetramers with glycoprotein N at the surface of the virion. Attaches the virion to host cell receptors including integrin ITGAV/ITGB3. This attachment induces virion internalization predominantly through clathrin-dependent endocytosis. Class II fusion protein that promotes fusion of viral membrane with host endosomal membrane after endocytosis of the virion. The chain is Envelopment polyprotein (GP) from Sin Nombre orthohantavirus (SNV).